The following is a 477-amino-acid chain: Argininosuccinate lyase (477 aa).

Belongs to the lyase 1 family. Argininosuccinate lyase subfamily.

The protein resides in the cytoplasm. It carries out the reaction 2-(N(omega)-L-arginino)succinate = fumarate + L-arginine. Its pathway is amino-acid biosynthesis; L-arginine biosynthesis; L-arginine from L-ornithine and carbamoyl phosphate: step 3/3. The protein is Argininosuccinate lyase of Corynebacterium glutamicum (strain R).